A 401-amino-acid chain; its full sequence is Dual-specificity RNA methyltransferase RlmN (401 aa).

Glu114 functions as the Proton acceptor in the catalytic mechanism. The Radical SAM core domain occupies Asp120–Asp365. Residues Cys127 and Cys370 are joined by a disulfide bond. The [4Fe-4S] cluster site is built by Cys134, Cys138, and Cys141. S-adenosyl-L-methionine is bound by residues Gly187–Glu188, Ser219, Ser241–His243, and Asn327. Cys370 functions as the S-methylcysteine intermediate in the catalytic mechanism.

The protein belongs to the radical SAM superfamily. RlmN family. It depends on [4Fe-4S] cluster as a cofactor.

The protein resides in the cytoplasm. The enzyme catalyses adenosine(2503) in 23S rRNA + 2 reduced [2Fe-2S]-[ferredoxin] + 2 S-adenosyl-L-methionine = 2-methyladenosine(2503) in 23S rRNA + 5'-deoxyadenosine + L-methionine + 2 oxidized [2Fe-2S]-[ferredoxin] + S-adenosyl-L-homocysteine. It carries out the reaction adenosine(37) in tRNA + 2 reduced [2Fe-2S]-[ferredoxin] + 2 S-adenosyl-L-methionine = 2-methyladenosine(37) in tRNA + 5'-deoxyadenosine + L-methionine + 2 oxidized [2Fe-2S]-[ferredoxin] + S-adenosyl-L-homocysteine. Specifically methylates position 2 of adenine 2503 in 23S rRNA and position 2 of adenine 37 in tRNAs. m2A2503 modification seems to play a crucial role in the proofreading step occurring at the peptidyl transferase center and thus would serve to optimize ribosomal fidelity. The protein is Dual-specificity RNA methyltransferase RlmN of Stenotrophomonas maltophilia (strain R551-3).